Consider the following 157-residue polypeptide: Sorting nexin-3 (157 aa).

Residues 1-21 are disordered; it reads MSKPFQPISDVINTSPKNKSQ. Residues 11–21 are compositionally biased toward polar residues; it reads VINTSPKNKSQ. The PX domain maps to 32 to 152; the sequence is NFLEIEVKNP…EFIQNEKWDP (121 aa). A 1,2-diacyl-sn-glycero-3-phospho-(1D-myo-inositol-3-phosphate)-binding residues include Arg75, Ser77, Lys101, and Arg117.

It belongs to the sorting nexin family.

It is found in the cytoplasm. The protein resides in the golgi apparatus membrane. It localises to the prevacuolar compartment membrane. Required for retention of late Golgi membrane proteins. Component of the retrieval machinery that functions by direct interaction with the cytosolic tails of certain TGN membrane proteins during the sorting/budding process at the prevacuolar compartment. Binds phosphatidylinositol 3-phosphate (PtdIns(P3)). This is Sorting nexin-3 (SNX3) from Candida albicans (strain SC5314 / ATCC MYA-2876) (Yeast).